The sequence spans 23 residues: Alpha-conotoxin-like RgIB (23 aa).

Cystine bridges form between C5-C11 and C6-C19. Positions 7 to 9 (KNP) are lacks the Ser-Xaa-Pro motif that is crucial for potent interaction with nAChR.

Expressed by venom duct.

It is found in the secreted. Its function is as follows. Alpha-conotoxins act on postsynaptic membranes, they bind to the nicotinic acetylcholine receptors (nAChR) and thus inhibit them. Is a specific blocker of the alpha-3-beta-4/CHRNA3-CHRNB4 image nAChR and may also block alpha-3-beta-4-alpha-5 (CHRNA3-CHRNB4-CHRNA5) channels. Has possibly a distinct nAChR binding mode from other alpha-conotoxins, due to a different three residue motif (lacks the Ser-Xaa-Pro motif). In vivo, causes hyperactivity and behavioral disorders in mice following intracranial injection. The protein is Alpha-conotoxin-like RgIB of Conus regius (Crown cone).